The primary structure comprises 562 residues: MLFRRFLNLTTKTPHLQTFRARHYFRNMSCPELIPPPTVRGMTVLDKGAFDKRISAPRLIVPRQLNFQQICSSVKKLLLKMECFKPVVSGEYKITLHPSAVKTWEDLKEIGLEDKGLTEENLVWEQMKLGYDNWRYDEILKAVLPEDKEALSAFSKVGHIVHLNLKEHLLPYKNLIGTVIKDKVVGCRAVVNKLVTIDNTYRNFQMELLCGEEDYQVSLKENGCIFEFDFSKVYWNSRLSTEHGRVVEMLKKGDVLLDVYAGVGPFSIPAAKKGYSVLANDLNPDSYKALVHNCAKNKVQGRITCFNKNGIDFIKEEIKQFIISKNQDDTFTGTIHITMNLPALAVEHLENYVGLLKDEQIELKHFPLVHVYCFAKGVEDNKLLARGLVEKNMGIPLGNNLKEIAFVRNVAPNKDMMRVSFYLTRQILCHNDIQLKRPTSETSHQDAKRKCNVLRKIATMGKRNIKNRNQQKQTAKKVKNVFAVNQSKKGNVKKAKEVTSKLKKINVQDKREKADKKFQDLHAHIVAKKPEKKPLPAKPASKKNKNQANTKQVEAGLDKMQM.

Residues 1–41 (MLFRRFLNLTTKTPHLQTFRARHYFRNMSCPELIPPPTVRG) constitute a mitochondrion transit peptide. Residues H243, 281–282 (DL), and N340 each bind S-adenosyl-L-methionine. Residues 523-534 (AHIVAKKPEKKP) show a composition bias toward basic and acidic residues. Positions 523-562 (AHIVAKKPEKKPLPAKPASKKNKNQANTKQVEAGLDKMQM) are disordered.

Belongs to the class I-like SAM-binding methyltransferase superfamily. TRM5/TYW2 family. Monomer.

The protein resides in the mitochondrion matrix. The protein localises to the nucleus. It localises to the cytoplasm. The enzyme catalyses guanosine(37) in tRNA + S-adenosyl-L-methionine = N(1)-methylguanosine(37) in tRNA + S-adenosyl-L-homocysteine + H(+). Specifically methylates the N1 position of guanosine-37 in various cytoplasmic and mitochondrial tRNAs. Methylation is not dependent on the nature of the nucleoside 5' of the target nucleoside. This is the first step in the biosynthesis of wybutosine (yW), a modified base adjacent to the anticodon of tRNAs and required for accurate decoding. The protein is tRNA (guanine(37)-N(1))-methyltransferase of Aedes aegypti (Yellowfever mosquito).